A 385-amino-acid polypeptide reads, in one-letter code: Trans-enoyl reductase poxH (385 aa).

NADP(+) is bound at residue 64–67; that stretch reads QPYS. 156–163 is a binding site for substrate; sequence PDPAAPPI. Residues 199–202, 223–226, Tyr241, and 289–290 each bind NADP(+); these read STSV, SGTD, and LG. 309-313 contributes to the substrate binding site; the sequence is HMAPL. 372–373 is an NADP(+) binding site; that stretch reads KR.

It belongs to the zinc-containing alcohol dehydrogenase family. In terms of assembly, monomer.

Its pathway is secondary metabolite biosynthesis. In terms of biological role, trans-enoyl reductase; part of the gene cluster that mediates the biosynthesis of oxaleimides, cytotoxic compounds containing an unusual disubstituted succinimide moiety. The first step of the pathway is provided by the HR-PKS poxF that serves in a new mode of collaborative biosynthesis with the PKS-NRPS poxE, by providing the olefin containing amino acid substrate via the synthesis of an ACP-bound dec-4-enoate. The cytochrome P450 monooxygenase poxM-catalyzed oxidation at the alpha-position creates the enzyme-bound 2-hydroxydec-4-enoyl-ACP thioester, which may be prone to spontaneous hydrolysis to yield 2-hydroxydec-4-enoic acid due to increased electrophilicity of the carbonyl. 2-hydroxydec-4-enoic acid can then be further oxidized by poxM to yield the alpha-ketoacid 2-oxodec-4-enoicacid, which is reductively aminated by the aminotransferase poxL to yield (S,E)-2-aminodec-4-enoic acid. The Hybrid PKS-NRPS synthetase poxE then performs condensation between the octaketide product of its PKS modules and the amino group of (S,E)-2-aminodec-4-enoic acid which is activated and incorporated by the adenylation domain. The resulting aminoacyl product can be cyclized by the Diels-Alderase PoxQ and reductively released by the reductive (R) domain of poxE to yield an aldehyde intermediate. The released aldehyde is then substrate for a Knoevenagel condensation by the hydrolyase poxO followed by an oxidation at the 5-position of the pyrrolidone ring. The presence of the olefin from the amino acid building block allows for migration of the substituted allyl group to occur. This allylic transposition reaction takes place in a conjugate addition, semipinacol-like fashion to yield a succinimide intermediate. Iterative two-electron oxidations of the C7 methyl of the succinimide intermediate to the carboxylic acid can be catalyzed by one of two remaining cytochrome P450 monooxygenasess poxC or poxD to yield oxaleimide A. Subsequent oxidation yields the maleimide scaffold oxaleimide I. Both oxaleimide A and oxaleimide I can undergo oxidative modifications in the decalin ring to yield the series of products oxaleimides B to H. This is Trans-enoyl reductase poxH from Penicillium oxalicum (strain 114-2 / CGMCC 5302) (Penicillium decumbens).